A 262-amino-acid chain; its full sequence is Inner membrane protein YcfZ (262 aa).

Over 1–4 (MKKF) the chain is Cytoplasmic. Residues 5–27 (IILLSLLILLPLTAASKPLIPIM) traverse the membrane as a helical segment. Over 28 to 182 (KTLFTDVTGT…HENAPPGSTN (155 aa)) the chain is Periplasmic. Residues 183–202 (TLGFIAWAATFILFSRIFYY) traverse the membrane as a helical segment. Over 203-206 (TTRF) the chain is Cytoplasmic. Residues 207–229 (IYALKFAVAMTIANMGYQALCLY) traverse the membrane as a helical segment. Residues 230 to 238 (IDNSFAITR) are Periplasmic-facing. The helical transmembrane segment at 239–258 (ISPLWAGLIGVCTFIAALLL) threads the bilayer. At 259 to 262 (TSKR) the chain is on the cytoplasmic side.

The protein localises to the cell inner membrane. This chain is Inner membrane protein YcfZ (ycfZ), found in Escherichia coli (strain K12).